Here is a 674-residue protein sequence, read N- to C-terminus: MPPPPGPAAALGTALLLLLLASESSHTVLLRAREAAQFLRPRQRRAYQVFEEAKQGHLERECVEEVCSKEEAREVFENDPETEYFYPRYQECMRKYGRPEEKNPDFAKCVQNLPDQCTPNPCDKKGTHICQDLMGNFFCVCTDGWGGRLCDKDVNECVQKNGGCSQVCHNKPGSFQCACHSGFSLASDGQTCQDIDECTDSDTCGDARCKNLPGSYSCLCDEGYTYSSKEKTCQDVDECQQDRCEQTCVNSPGSYTCHCDGRGGLKLSPDMDTCEDILPCVPFSMAKSVKSLYLGRMFSGTPVIRLRFKRLQPTRLLAEFDFRTFDPEGVLFFAGGRSDSTWIVLGLRAGRLELQLRYNGVGRITSSGPTINHGMWQTISVEELERNLVIKVNKDAVMKIAVAGELFQLERGLYHLNLTVGGIPFKESELVQPINPRLDGCMRSWNWLNGEDSAIQETVKANTKMQCFSVTERGSFFPGNGFATYRLNYTRTSLDVGTETTWEVKVVARIRPATDTGVLLALVGDDDVVPISVALVDYHSTKKLKKQLVVLAVEDVALALMEIKVCDSQEHTVTVSLREGEATLEVDGTKGQSEVSTAQLQERLDTLKTHLQGSVHTYVGGLPEVSVISAPVTAFYRGCMTLEVNGKILDLDTASYKHSDITSHSCPPVEHATP.

A signal peptide spans 1–27 (MPPPPGPAAALGTALLLLLLASESSHT). In terms of domain architecture, Gla spans 50–91 (FEEAKQGHLERECVEEVCSKEEAREVFENDPETEYFYPRYQE). Residues Cys62 and Cys67 are joined by a disulfide bond. Ser68 is subject to Phosphoserine. One can recognise an EGF-like 1; calcium-binding domain in the interval 113 to 151 (LPDQCTPNPCDKKGTHICQDLMGNFFCVCTDGWGGRLCD). Cystine bridges form between Cys117-Cys130, Cys122-Cys139, Cys141-Cys150, Cys157-Cys168, Cys164-Cys177, Cys179-Cys192, Cys198-Cys209, Cys204-Cys218, Cys220-Cys233, Cys239-Cys248, Cys244-Cys257, Cys259-Cys274, Cys280-Cys566, and Cys441-Cys467. Residues 153–193 (DVNECVQKNGGCSQVCHNKPGSFQCACHSGFSLASDGQTCQ) form the EGF-like 2; calcium-binding domain. The EGF-like 3; calcium-binding domain occupies 194-234 (DIDECTDSDTCGDARCKNLPGSYSCLCDEGYTYSSKEKTCQ). An EGF-like 4; calcium-binding domain is found at 235–275 (DVDECQQDRCEQTCVNSPGSYTCHCDGRGGLKLSPDMDTCE). Laminin G-like domains are found at residues 295-467 (GRMF…KMQC) and 474-666 (GSFF…SHSC). Ca(2+) is bound by residues Asp326 and Glu328. Asn417 is a glycosylation site (N-linked (GlcNAc...) asparagine). Arg437 provides a ligand contact to Ca(2+). N-linked (GlcNAc...) asparagine glycosylation occurs at Asn488. Thr609 bears the Phosphothreonine mark. Ser614 carries the phosphoserine modification. Residues Thr617 and Thr633 each carry the phosphothreonine modification. The residue at position 636 (Tyr636) is a Phosphotyrosine. A disulfide bridge links Cys639 with Cys666. Asp652 contributes to the Ca(2+) binding site.

In terms of assembly, heterodimer and heterotetramer with AXL. In terms of processing, gamma-carboxyglutamate residues are formed by vitamin K dependent carboxylation. These residues are essential for the binding of calcium.

The protein resides in the secreted. In terms of biological role, ligand for tyrosine-protein kinase receptors AXL, TYRO3 and MER whose signaling is implicated in cell growth and survival, cell adhesion and cell migration. GAS6/AXL signaling plays a role in various processes such as endothelial cell survival during acidification by preventing apoptosis, optimal cytokine signaling during human natural killer cell development, hepatic regeneration, gonadotropin-releasing hormone neuron survival and migration, platelet activation, or regulation of thrombotic responses. In Mus musculus (Mouse), this protein is Growth arrest-specific protein 6 (Gas6).